The chain runs to 106 residues: ATP-dependent Clp protease adapter protein ClpS (106 aa).

It belongs to the ClpS family. As to quaternary structure, binds to the N-terminal domain of the chaperone ClpA.

In terms of biological role, involved in the modulation of the specificity of the ClpAP-mediated ATP-dependent protein degradation. This chain is ATP-dependent Clp protease adapter protein ClpS, found in Salmonella gallinarum (strain 287/91 / NCTC 13346).